The primary structure comprises 90 residues: Small ribosomal subunit protein bS16 (90 aa).

Belongs to the bacterial ribosomal protein bS16 family.

The chain is Small ribosomal subunit protein bS16 from Streptococcus gordonii (strain Challis / ATCC 35105 / BCRC 15272 / CH1 / DL1 / V288).